The chain runs to 154 residues: Small ribosomal subunit protein uS19 (154 aa).

It belongs to the universal ribosomal protein uS19 family.

This is Small ribosomal subunit protein uS19 (RPS15) from Oryza sativa subsp. japonica (Rice).